Reading from the N-terminus, the 145-residue chain is Small ribosomal subunit protein uS19 (145 aa).

An N-acetylalanine modification is found at A2. K108 is covalently cross-linked (Glycyl lysine isopeptide (Lys-Gly) (interchain with G-Cter in SUMO2)).

Belongs to the universal ribosomal protein uS19 family. As to quaternary structure, component of the small ribosomal subunit.

It localises to the cytoplasm. In terms of biological role, component of the small ribosomal subunit. The ribosome is a large ribonucleoprotein complex responsible for the synthesis of proteins in the cell. The protein is Small ribosomal subunit protein uS19 (RPS15) of Bos taurus (Bovine).